A 256-amino-acid polypeptide reads, in one-letter code: Thiazole synthase (256 aa).

K95 functions as the Schiff-base intermediate with DXP in the catalytic mechanism. 1-deoxy-D-xylulose 5-phosphate is bound by residues G156, 182–183 (AG), and 204–205 (NT).

This sequence belongs to the ThiG family. Homotetramer. Forms heterodimers with either ThiH or ThiS.

It localises to the cytoplasm. It catalyses the reaction [ThiS sulfur-carrier protein]-C-terminal-Gly-aminoethanethioate + 2-iminoacetate + 1-deoxy-D-xylulose 5-phosphate = [ThiS sulfur-carrier protein]-C-terminal Gly-Gly + 2-[(2R,5Z)-2-carboxy-4-methylthiazol-5(2H)-ylidene]ethyl phosphate + 2 H2O + H(+). It functions in the pathway cofactor biosynthesis; thiamine diphosphate biosynthesis. Functionally, catalyzes the rearrangement of 1-deoxy-D-xylulose 5-phosphate (DXP) to produce the thiazole phosphate moiety of thiamine. Sulfur is provided by the thiocarboxylate moiety of the carrier protein ThiS. In vitro, sulfur can be provided by H(2)S. This is Thiazole synthase from Salmonella schwarzengrund (strain CVM19633).